We begin with the raw amino-acid sequence, 186 residues long: uncharacterized protein (186 aa).

An N-terminal signal peptide occupies residues methionine 1–alanine 21.

This is an uncharacterized protein from Rickettsia conorii (strain ATCC VR-613 / Malish 7).